We begin with the raw amino-acid sequence, 530 residues long: Polyprotein pp62 (530 aa).

This sequence belongs to the asfivirus polyprotein pp62 family. In terms of assembly, monomer. Predominantly exists as a monomer, with very little dimers. Homodimerization seems to be linked to low pH. As to quaternary structure, homodimer; disulfide-linked. Homotrimer; disulfide-linked. Homohexamer. In terms of processing, monoubiquitinated in vitro by viral UBCv1. Specific enzymatic cleavages in vivo by the viral pS273R protease yield mature proteins.

The protein localises to the host cytoplasm. It localises to the host perinuclear region. It is found in the virion. In terms of biological role, essential for the correct assembly and maturation of the core of the virion. Functionally, component of the core shell. Binds to phosphatidylserine, which may enable the core shell binding with the inner membrane. Component of the core shell. Binds to phosphatidylserine and DNA, which may link the core shell to the inner membrane and to the viral nucleoid. Its function is as follows. Component of the core shell. The protein is Polyprotein pp62 of African swine fever virus (strain Badajoz 1971 Vero-adapted) (Ba71V).